A 203-amino-acid chain; its full sequence is 22.3 kDa class VI heat shock protein (203 aa).

The 118-residue stretch at 86-203 (ALRRGARTTV…DAHQAAAATA (118 aa)) folds into the sHSP domain.

It belongs to the small heat shock protein (HSP20) family. May form oligomeric structures.

It localises to the cytoplasm. The protein is 22.3 kDa class VI heat shock protein (HSP22.3) of Oryza sativa subsp. japonica (Rice).